Reading from the N-terminus, the 266-residue chain is Probable matrix protein (266 aa).

The tract at residues alanine 158–proline 177 is disordered. The segment covering glutamate 167–proline 177 has biased composition (acidic residues).

It is found in the virion. Its function is as follows. May play a role in virion budding and release by binding the ribonucleocapsid and the host membrane. The protein is Probable matrix protein of Ixodidae (hardbacked ticks).